The sequence spans 435 residues: DEAD-box ATP-dependent RNA helicase CshB (435 aa).

The short motif at 5-33 (SRFDQFGFQPFIGLAIDKLGFYEPTEVQQ) is the Q motif element. The Helicase ATP-binding domain occupies 36-208 (IPGILKGESI…SKYMENPRYE (173 aa)). 49–56 (SQTGTGKT) provides a ligand contact to ATP. The DEAD box motif lies at 156–159 (DEAD). Positions 235 to 378 (LLKNVLVGSQ…HVDWKNKEFV (144 aa)) constitute a Helicase C-terminal domain. Residues 383-435 (RNRRAKREAKRETADPREIGMRKKAKQKGKPNYKKKINYKMNEIKRRERRKKR) form a disordered region. Residues 391–403 (AKRETADPREIGM) are compositionally biased toward basic and acidic residues. The span at 404 to 420 (RKKAKQKGKPNYKKKIN) shows a compositional bias: basic residues.

This sequence belongs to the DEAD box helicase family. CshB subfamily.

It is found in the cytoplasm. The enzyme catalyses ATP + H2O = ADP + phosphate + H(+). DEAD-box RNA helicase involved in cold tolerance, motility, and tolerance to heat, alkali and oxidative stress. In Listeria monocytogenes serovar 1/2a (strain ATCC BAA-679 / EGD-e), this protein is DEAD-box ATP-dependent RNA helicase CshB.